The sequence spans 326 residues: MDSHAGNTADPRGSRRGVGLQGSGSPRARQLLERLDARPLAARAAADLSALVRKAGATLRLRHKEAISGLDSADIEVADSRLPHATLVEHRPQHQRSDTQGPRMEPLPVIQNKASYASRLPQATGRFSVELVRGPAGFGLTLSGGRNVSGNVPLAVCGLLKDGPAQRCGHLQAGDLVLYINGQSTRGLTHAQAVEWIRTGGPRLCLVLQRPQEMNGSRSKEVGGGHQKTDRIPDPRGGRMMESRGTISPVHHRPKTRTGPGPSPESVATGHVVRAAEHPAEDLEDRIPGSPGPWLVPSEDRLSRALGIRGGGVQLAQEMAAGRRRH.

The disordered stretch occupies residues 1-32; the sequence is MDSHAGNTADPRGSRRGVGLQGSGSPRARQLL. The PDZ domain maps to 128–212; that stretch reads SVELVRGPAG…RLCLVLQRPQ (85 aa). Residues 214–267 are disordered; it reads MNGSRSKEVGGGHQKTDRIPDPRGGRMMESRGTISPVHHRPKTRTGPGPSPESV. Over residues 218–242 the composition is skewed to basic and acidic residues; that stretch reads RSKEVGGGHQKTDRIPDPRGGRMME. At serine 263 the chain carries Phosphoserine.

In Rattus norvegicus (Rat), this protein is PDZ domain-containing protein MAGIX (Magix).